The sequence spans 471 residues: Variant surface glycoprotein ILTAT 1.1BC (471 aa).

Residues Met-1 to Ala-21 form the signal peptide. Asn-130 carries an N-linked (GlcNAc...) asparagine glycan. The segment covering Thr-158 to Glu-168 has biased composition (polar residues). Disordered regions lie at residues Thr-158–Lys-183 and Gly-204–Ser-232. A compositionally biased stretch (basic and acidic residues) spans Asp-214 to Asn-226. 2 N-linked (GlcNAc...) asparagine glycosylation sites follow: Asn-220 and Asn-260. Cystine bridges form between Cys-397/Cys-410 and Cys-406/Cys-421. The interval Ala-432 to Ser-454 is disordered. Asn-450 is a glycosylation site (N-linked (GlcNAc...) asparagine). Ser-454 carries the GPI-anchor amidated serine lipid modification. A propeptide spans Asn-455–Leu-471 (removed in mature form).

It is found in the cell membrane. Functionally, VSG forms a coat on the surface of the parasite. The trypanosome evades the immune response of the host by expressing a series of antigenically distinct VSGs from an estimated 1000 VSG genes. In Trypanosoma brucei brucei, this protein is Variant surface glycoprotein ILTAT 1.1BC.